Reading from the N-terminus, the 214-residue chain is Ribosomal RNA small subunit methyltransferase G (214 aa).

S-adenosyl-L-methionine-binding positions include Gly77, Leu82, 128 to 129 (VE), and Arg143.

Belongs to the methyltransferase superfamily. RNA methyltransferase RsmG family.

It localises to the cytoplasm. It carries out the reaction guanosine(527) in 16S rRNA + S-adenosyl-L-methionine = N(7)-methylguanosine(527) in 16S rRNA + S-adenosyl-L-homocysteine. Specifically methylates the N7 position of guanine in position 527 of 16S rRNA. This chain is Ribosomal RNA small subunit methyltransferase G, found in Nitrosomonas eutropha (strain DSM 101675 / C91 / Nm57).